Here is a 452-residue protein sequence, read N- to C-terminus: GTPase Der (452 aa).

EngA-type G domains follow at residues 4–169 (PIVA…PAPQ) and 177–352 (IKVA…QEHR). GTP is bound by residues 10–17 (GRPNVGKS), 57–61 (DTGGL), 120–123 (NKCE), 183–190 (GRPNVGKS), 230–234 (DTAGI), and 295–298 (NKWD). The region spanning 353–439 (RRVTTAVINE…IRLFWRGKKV (87 aa)) is the KH-like domain.

It belongs to the TRAFAC class TrmE-Era-EngA-EngB-Septin-like GTPase superfamily. EngA (Der) GTPase family. Associates with the 50S ribosomal subunit.

Its function is as follows. GTPase that plays an essential role in the late steps of ribosome biogenesis. This is GTPase Der from Synechocystis sp. (strain ATCC 27184 / PCC 6803 / Kazusa).